A 300-amino-acid chain; its full sequence is ATP-dependent (S)-NAD(P)H-hydrate dehydratase (300 aa).

One can recognise a YjeF C-terminal domain in the interval tyrosine 6–leucine 297. Residues glycine 106 and asparagine 158–arginine 164 contribute to the (6S)-NADPHX site. Residues lysine 188–aspartate 192 and glycine 218–glycine 227 contribute to the ATP site. Residue aspartate 228 coordinates (6S)-NADPHX.

This sequence belongs to the NnrD/CARKD family. Mg(2+) is required as a cofactor.

It carries out the reaction (6S)-NADHX + ATP = ADP + phosphate + NADH + H(+). It catalyses the reaction (6S)-NADPHX + ATP = ADP + phosphate + NADPH + H(+). Functionally, catalyzes the dehydration of the S-form of NAD(P)HX at the expense of ATP, which is converted to ADP. Together with NAD(P)HX epimerase, which catalyzes the epimerization of the S- and R-forms, the enzyme allows the repair of both epimers of NAD(P)HX, a damaged form of NAD(P)H that is a result of enzymatic or heat-dependent hydration. This Pediculus humanus subsp. corporis (Body louse) protein is ATP-dependent (S)-NAD(P)H-hydrate dehydratase.